The chain runs to 227 residues: MLSMFMYNNIVDYVDDIDNGIVQDIEDEASNNVDHDYVYPLPENMVYRFDKSTNILDYLSTERDHVMMAVRYYMSKQRLDDLYRQLPTKTRSYIDIINIYCDKVSNDYNRDMNIIHDMASTESFTVYDINNEVNTMLMDNKGLGVRLATISFITELGRRCMNPVETIKMFTLLSHTICDDCFVDYITDISTPRDNATTNSSTREYLKLMGIAVIMFATYKTLKYMIG.

It belongs to the orthopoxvirus OPG045 family. Homodimer. Interacts with host pro-apoptotic protein BCL2L11 (via BH3 domain). Interacts with host NLRP1. Interacts with host BAK.

The protein resides in the host mitochondrion outer membrane. The protein localises to the host cytoplasm. In terms of biological role, plays a role in evading host innate immune response by inhibiting host inflammasome activation. Interacts with and inhibits NLR-mediated interleukin-1 beta/IL1B production in infected cells. At the host mitochondria outer membrane, interacts with the BH3 domain of host BAK and prevents BAK from binding active BAX. In turn, host apoptosis is inhibited. The protein is Apoptosis regulator OPG045 (OPG045) of Oryctolagus cuniculus (Rabbit).